Consider the following 346-residue polypeptide: Mannonate dehydratase (346 aa).

This sequence belongs to the mannonate dehydratase family. Requires Fe(2+) as cofactor. Mn(2+) is required as a cofactor.

It carries out the reaction D-mannonate = 2-dehydro-3-deoxy-D-gluconate + H2O. The protein operates within carbohydrate metabolism; pentose and glucuronate interconversion. Its function is as follows. Catalyzes the dehydration of D-mannonate. In Cupriavidus taiwanensis (strain DSM 17343 / BCRC 17206 / CCUG 44338 / CIP 107171 / LMG 19424 / R1) (Ralstonia taiwanensis (strain LMG 19424)), this protein is Mannonate dehydratase.